A 24-amino-acid polypeptide reads, in one-letter code: Positive regulator of RepFIC repA1 expression (24 aa).

The chain is Positive regulator of RepFIC repA1 expression (repL) from Escherichia coli (strain K12).